Consider the following 207-residue polypeptide: Large ribosomal subunit protein uL4 (207 aa).

The disordered stretch occupies residues 48–78; it reads THKVKTRSEVRGGGRKPWRQKGTGRARQGSI. Basic residues predominate over residues 60-71; sequence GGRKPWRQKGTG.

Belongs to the universal ribosomal protein uL4 family. In terms of assembly, part of the 50S ribosomal subunit.

One of the primary rRNA binding proteins, this protein initially binds near the 5'-end of the 23S rRNA. It is important during the early stages of 50S assembly. It makes multiple contacts with different domains of the 23S rRNA in the assembled 50S subunit and ribosome. Functionally, forms part of the polypeptide exit tunnel. The chain is Large ribosomal subunit protein uL4 from Bacillus pumilus (strain SAFR-032).